We begin with the raw amino-acid sequence, 169 residues long: Endoribonuclease YbeY (169 aa).

The disordered stretch occupies residues 72-95 (GPVAAPRQEPDSPPACRKDSSHAE). Residues histidine 131, histidine 135, and histidine 141 each coordinate Zn(2+).

The protein belongs to the endoribonuclease YbeY family. Zn(2+) is required as a cofactor.

The protein localises to the cytoplasm. Its function is as follows. Single strand-specific metallo-endoribonuclease involved in late-stage 70S ribosome quality control and in maturation of the 3' terminus of the 16S rRNA. In Oleidesulfovibrio alaskensis (strain ATCC BAA-1058 / DSM 17464 / G20) (Desulfovibrio alaskensis), this protein is Endoribonuclease YbeY.